Here is a 371-residue protein sequence, read N- to C-terminus: MLVGIPTEIKNNEYRVAITPAGVAELTRRGHEVIIQAGAGEGSAISDRDFKAAGAEIVNTADQVWSEAELLLKVKEPIEPEYSRMRKGQTLFTYLHLAASKPCTDALLASGTTSIAYETVQTAEGALPLLAPMSEVAGRLSAQVGAYHLMRSYGGRGVLMGGVPGVAPAEVVVIGAGTAGYNAARVAAGMGAHVTVFDLNINTLRRVDGEFGGRIETRYSSSLELEEAVKKADLVIGAVLVPGAKAPKLVTNSTVAHMKPGAVLVDIAIDQGGCFEDSRPTTHDEPTFKVHDTIFYCVANMPGAVPRTSTFALTNSTMPYVLKLADKGWQAACASDSALAKGLSTHDGKLLSEAVAKDLDLPFTDAAQFLA.

Positions 15 and 75 each coordinate substrate. H96 (proton donor/acceptor) is an active-site residue. NAD(+)-binding positions include S134, 178–179 (TA), D198, S220, 239–240 (VL), 267–270 (IAID), R279, and 298–301 (VANM). D270 acts as the Proton donor/acceptor in catalysis.

Belongs to the AlaDH/PNT family. As to quaternary structure, homohexamer. Trimer of dimers.

It is found in the cytoplasm. The enzyme catalyses L-alanine + NAD(+) + H2O = pyruvate + NH4(+) + NADH + H(+). It participates in amino-acid degradation; L-alanine degradation via dehydrogenase pathway; NH(3) and pyruvate from L-alanine: step 1/1. Functionally, catalyzes the reversible reductive amination of pyruvate to L-alanine. Required for proficient utilization of D- or L-alanine as a nitrogen source. May be required for the adaptation from aerobic growth to anaerobic dormancy. It could be involved in the maintenance of the NAD pool during the shift to an anaerobic dormant state in which oxygen as a terminal electron acceptor becomes limiting. The sequence is that of Alanine dehydrogenase from Mycolicibacterium smegmatis (strain ATCC 700084 / mc(2)155) (Mycobacterium smegmatis).